A 318-amino-acid polypeptide reads, in one-letter code: uncharacterized protein (318 aa).

It to E.coli YfaT and P.aeruginosa PA4490.

This is an uncharacterized protein from Thermotoga maritima (strain ATCC 43589 / DSM 3109 / JCM 10099 / NBRC 100826 / MSB8).